A 511-amino-acid polypeptide reads, in one-letter code: Probable Xaa-Pro aminopeptidase MAA_08947 (511 aa).

Residues Asp-275, Asp-286, Glu-439, and Glu-480 each contribute to the Mn(2+) site.

It belongs to the peptidase M24B family. Mn(2+) serves as cofactor.

The enzyme catalyses Release of any N-terminal amino acid, including proline, that is linked to proline, even from a dipeptide or tripeptide.. Its function is as follows. Catalyzes the removal of a penultimate prolyl residue from the N-termini of peptides. This is Probable Xaa-Pro aminopeptidase MAA_08947 from Metarhizium robertsii (strain ARSEF 23 / ATCC MYA-3075) (Metarhizium anisopliae (strain ARSEF 23)).